The chain runs to 405 residues: Dihydrolipoyllysine-residue succinyltransferase component of 2-oxoglutarate dehydrogenase complex (405 aa).

Residues 3–78 form the Lipoyl-binding domain; the sequence is SVDILVPDLP…TSRQILGRLR (76 aa). An N6-lipoyllysine modification is found at lysine 44. Residues 75–111 are disordered; sequence GRLREGNSAGKETSAKSEEKASTPAQRQQASLEEQNN. Positions 97-111 are enriched in polar residues; sequence TPAQRQQASLEEQNN. Residues 113-150 enclose the Peripheral subunit-binding (PSBD) domain; it reads ALSPAIRRLLAEHNLDASAIKGTGVGGRLTREDVEKHL. Lysine 148 bears the N6-acetyllysine mark. Residues 153 to 173 are compositionally biased toward low complexity; the sequence is APAKESAPAAAAPAAQPALAA. The segment at 153–178 is disordered; it reads APAKESAPAAAAPAAQPALAARSEKR. Residues histidine 376 and aspartate 380 contribute to the active site.

Belongs to the 2-oxoacid dehydrogenase family. Forms a 24-polypeptide structural core with octahedral symmetry. Part of the 2-oxoglutarate dehydrogenase (OGDH) complex composed of E1 (2-oxoglutarate dehydrogenase), E2 (dihydrolipoamide succinyltransferase) and E3 (dihydrolipoamide dehydrogenase); the complex contains multiple copies of the three enzymatic components (E1, E2 and E3). Interacts with SucA (via N-terminus), the E1 component of OGDH complex. (R)-lipoate serves as cofactor.

It catalyses the reaction N(6)-[(R)-dihydrolipoyl]-L-lysyl-[protein] + succinyl-CoA = N(6)-[(R)-S(8)-succinyldihydrolipoyl]-L-lysyl-[protein] + CoA. Its pathway is amino-acid degradation; L-lysine degradation via saccharopine pathway; glutaryl-CoA from L-lysine: step 6/6. Functionally, E2 component of the 2-oxoglutarate dehydrogenase (OGDH) complex which catalyzes the second step in the conversion of 2-oxoglutarate to succinyl-CoA and CO(2). This is Dihydrolipoyllysine-residue succinyltransferase component of 2-oxoglutarate dehydrogenase complex (sucB) from Escherichia coli O157:H7.